A 182-amino-acid chain; its full sequence is Large ribosomal subunit protein uL6 (182 aa).

Belongs to the universal ribosomal protein uL6 family. As to quaternary structure, part of the 50S ribosomal subunit.

Functionally, this protein binds to the 23S rRNA, and is important in its secondary structure. It is located near the subunit interface in the base of the L7/L12 stalk, and near the tRNA binding site of the peptidyltransferase center. This Aeropyrum pernix (strain ATCC 700893 / DSM 11879 / JCM 9820 / NBRC 100138 / K1) protein is Large ribosomal subunit protein uL6.